The primary structure comprises 311 residues: HPr kinase/phosphorylase (311 aa).

Residues His136 and Lys157 contribute to the active site. Gly151–Ser158 lines the ATP pocket. Mg(2+) is bound at residue Ser158. Catalysis depends on Asp175, which acts as the Proton acceptor; for phosphorylation activity. Proton donor; for dephosphorylation activity. Residues Leu199–Asn208 form an important for the catalytic mechanism of both phosphorylation and dephosphorylation region. Glu200 serves as a coordination point for Mg(2+). The active site involves Arg241. The tract at residues Pro262–Arg267 is important for the catalytic mechanism of dephosphorylation.

It belongs to the HPrK/P family. Homohexamer. It depends on Mg(2+) as a cofactor.

The enzyme catalyses [HPr protein]-L-serine + ATP = [HPr protein]-O-phospho-L-serine + ADP + H(+). It catalyses the reaction [HPr protein]-O-phospho-L-serine + phosphate + H(+) = [HPr protein]-L-serine + diphosphate. In terms of biological role, catalyzes the ATP- as well as the pyrophosphate-dependent phosphorylation of a specific serine residue in HPr, a phosphocarrier protein of the phosphoenolpyruvate-dependent sugar phosphotransferase system (PTS). HprK/P also catalyzes the pyrophosphate-producing, inorganic phosphate-dependent dephosphorylation (phosphorolysis) of seryl-phosphorylated HPr (P-Ser-HPr). The two antagonistic activities of HprK/P are regulated by several intracellular metabolites, which change their concentration in response to the absence or presence of rapidly metabolisable carbon sources (glucose, fructose, etc.) in the growth medium. Therefore, by controlling the phosphorylation state of HPr, HPrK/P is a sensor enzyme that plays a major role in the regulation of carbon metabolism and sugar transport: it mediates carbon catabolite repression (CCR), and regulates PTS-catalyzed carbohydrate uptake and inducer exclusion. The polypeptide is HPr kinase/phosphorylase (Staphylococcus haemolyticus (strain JCSC1435)).